A 389-amino-acid chain; its full sequence is Phospho-N-acetylmuramoyl-pentapeptide-transferase (389 aa).

The next 10 membrane-spanning stretches (helical) occupy residues 25–45 (RAVM…PWVI), 73–93 (TMGG…WGDL), 97–117 (FIWI…VDDY), 135–155 (FWQS…VSEA), 190–210 (ISYP…IVGA), 222–242 (GLVI…AYVM), 258–278 (GAGE…AFLW), 286–306 (VFMG…VAVI), 311–331 (IVLF…MLQV), and 366–386 (QVVV…LSTL).

It belongs to the glycosyltransferase 4 family. MraY subfamily. Mg(2+) serves as cofactor.

Its subcellular location is the cell inner membrane. The catalysed reaction is UDP-N-acetyl-alpha-D-muramoyl-L-alanyl-gamma-D-glutamyl-meso-2,6-diaminopimeloyl-D-alanyl-D-alanine + di-trans,octa-cis-undecaprenyl phosphate = di-trans,octa-cis-undecaprenyl diphospho-N-acetyl-alpha-D-muramoyl-L-alanyl-D-glutamyl-meso-2,6-diaminopimeloyl-D-alanyl-D-alanine + UMP. It participates in cell wall biogenesis; peptidoglycan biosynthesis. Its function is as follows. Catalyzes the initial step of the lipid cycle reactions in the biosynthesis of the cell wall peptidoglycan: transfers peptidoglycan precursor phospho-MurNAc-pentapeptide from UDP-MurNAc-pentapeptide onto the lipid carrier undecaprenyl phosphate, yielding undecaprenyl-pyrophosphoryl-MurNAc-pentapeptide, known as lipid I. The chain is Phospho-N-acetylmuramoyl-pentapeptide-transferase from Burkholderia mallei (strain NCTC 10247).